Here is a 364-residue protein sequence, read N- to C-terminus: Chaperone protein DnaJ 1 (364 aa).

A J domain is found at aspartate 7–leucine 71. A CR-type zinc finger spans residues glycine 124 to glutamine 200. Zn(2+)-binding residues include cysteine 137, cysteine 140, cysteine 154, cysteine 157, cysteine 174, cysteine 177, cysteine 188, and cysteine 191. CXXCXGXG motif repeat units lie at residues cysteine 137–glycine 144, cysteine 154–glycine 161, cysteine 174–glycine 181, and cysteine 188–glycine 195.

Belongs to the DnaJ family. Homodimer. Zn(2+) is required as a cofactor.

The protein localises to the cytoplasm. In terms of biological role, participates actively in the response to hyperosmotic and heat shock by preventing the aggregation of stress-denatured proteins and by disaggregating proteins, also in an autonomous, DnaK-independent fashion. Unfolded proteins bind initially to DnaJ; upon interaction with the DnaJ-bound protein, DnaK hydrolyzes its bound ATP, resulting in the formation of a stable complex. GrpE releases ADP from DnaK; ATP binding to DnaK triggers the release of the substrate protein, thus completing the reaction cycle. Several rounds of ATP-dependent interactions between DnaJ, DnaK and GrpE are required for fully efficient folding. Also involved, together with DnaK and GrpE, in the DNA replication of plasmids through activation of initiation proteins. The protein is Chaperone protein DnaJ 1 of Aquifex aeolicus (strain VF5).